The sequence spans 155 residues: Ribosome maturation factor RimP (155 aa).

The protein belongs to the RimP family.

The protein localises to the cytoplasm. In terms of biological role, required for maturation of 30S ribosomal subunits. The protein is Ribosome maturation factor RimP of Synechococcus sp. (strain CC9902).